A 139-amino-acid polypeptide reads, in one-letter code: S-adenosylmethionine decarboxylase proenzyme (139 aa).

The active-site Schiff-base intermediate with substrate; via pyruvic acid is Ser63. Ser63 carries the post-translational modification Pyruvic acid (Ser); by autocatalysis. His68 (proton acceptor; for processing activity) is an active-site residue. Cys83 functions as the Proton donor; for catalytic activity in the catalytic mechanism.

The protein belongs to the prokaryotic AdoMetDC family. Type 1 subfamily. As to quaternary structure, heterotetramer of two alpha and two beta chains arranged as a dimer of alpha/beta heterodimers. Requires pyruvate as cofactor. Is synthesized initially as an inactive proenzyme. Formation of the active enzyme involves a self-maturation process in which the active site pyruvoyl group is generated from an internal serine residue via an autocatalytic post-translational modification. Two non-identical subunits are generated from the proenzyme in this reaction, and the pyruvate is formed at the N-terminus of the alpha chain, which is derived from the carboxyl end of the proenzyme. The post-translation cleavage follows an unusual pathway, termed non-hydrolytic serinolysis, in which the side chain hydroxyl group of the serine supplies its oxygen atom to form the C-terminus of the beta chain, while the remainder of the serine residue undergoes an oxidative deamination to produce ammonia and the pyruvoyl group blocking the N-terminus of the alpha chain.

The catalysed reaction is S-adenosyl-L-methionine + H(+) = S-adenosyl 3-(methylsulfanyl)propylamine + CO2. It functions in the pathway amine and polyamine biosynthesis; S-adenosylmethioninamine biosynthesis; S-adenosylmethioninamine from S-adenosyl-L-methionine: step 1/1. Catalyzes the decarboxylation of S-adenosylmethionine to S-adenosylmethioninamine (dcAdoMet), the propylamine donor required for the synthesis of the polyamines spermine and spermidine from the diamine putrescine. The polypeptide is S-adenosylmethionine decarboxylase proenzyme (Pyrococcus furiosus (strain ATCC 43587 / DSM 3638 / JCM 8422 / Vc1)).